Consider the following 420-residue polypeptide: Serine hydroxymethyltransferase (420 aa).

(6S)-5,6,7,8-tetrahydrofolate-binding positions include Leu123 and 127-129 (GHL). An N6-(pyridoxal phosphate)lysine modification is found at Lys232. 357–359 (SPF) contributes to the (6S)-5,6,7,8-tetrahydrofolate binding site.

This sequence belongs to the SHMT family. Homodimer. Pyridoxal 5'-phosphate serves as cofactor.

The protein localises to the cytoplasm. It catalyses the reaction (6R)-5,10-methylene-5,6,7,8-tetrahydrofolate + glycine + H2O = (6S)-5,6,7,8-tetrahydrofolate + L-serine. It functions in the pathway one-carbon metabolism; tetrahydrofolate interconversion. It participates in amino-acid biosynthesis; glycine biosynthesis; glycine from L-serine: step 1/1. Catalyzes the reversible interconversion of serine and glycine with tetrahydrofolate (THF) serving as the one-carbon carrier. This reaction serves as the major source of one-carbon groups required for the biosynthesis of purines, thymidylate, methionine, and other important biomolecules. Also exhibits THF-independent aldolase activity toward beta-hydroxyamino acids, producing glycine and aldehydes, via a retro-aldol mechanism. In Streptococcus pyogenes serotype M4 (strain MGAS10750), this protein is Serine hydroxymethyltransferase.